The sequence spans 945 residues: Probable inorganic carbon transporter subunit DabA (945 aa).

C408, D410, H651, and C666 together coordinate Zn(2+).

Belongs to the inorganic carbon transporter (TC 9.A.2) DabA family. In terms of assembly, forms a complex with DabB. Zn(2+) is required as a cofactor.

It localises to the cell inner membrane. Functionally, part of an energy-coupled inorganic carbon pump. The sequence is that of Probable inorganic carbon transporter subunit DabA from Sulfurihydrogenibium azorense (strain DSM 15241 / OCM 825 / Az-Fu1).